The following is a 159-amino-acid chain: Ribosomal RNA large subunit methyltransferase H (159 aa).

S-adenosyl-L-methionine-binding positions include leucine 76, glycine 108, and 127–132; that span reads FSKMTF.

It belongs to the RNA methyltransferase RlmH family. In terms of assembly, homodimer.

The protein resides in the cytoplasm. It carries out the reaction pseudouridine(1915) in 23S rRNA + S-adenosyl-L-methionine = N(3)-methylpseudouridine(1915) in 23S rRNA + S-adenosyl-L-homocysteine + H(+). Functionally, specifically methylates the pseudouridine at position 1915 (m3Psi1915) in 23S rRNA. In Clostridium botulinum (strain 657 / Type Ba4), this protein is Ribosomal RNA large subunit methyltransferase H.